The following is a 386-amino-acid chain: Agamous-like MADS-box protein AGL30 (386 aa).

The region spanning 1–53 (MGRVKLKIKKLENTNGRQSTFAKRKNGILKKANELSILCDIDIVLLMFSPTGK) is the MADS-box domain. The segment at 341 to 360 (PDSSAYNDNTNQTRFGSSSS) is disordered. Over residues 344 to 356 (SAYNDNTNQTRFG) the composition is skewed to polar residues.

In terms of assembly, forms heterodimers with AGL66 and AGL104. In terms of tissue distribution, expressed in pollen.

The protein localises to the nucleus. In terms of biological role, probable transcription factor that forms heterodimers with the MADS-box proteins AGL66 and AGL104 and is involved in the regulation of pollen maturation at the late stages of pollen development and pollen tube growth. The sequence is that of Agamous-like MADS-box protein AGL30 from Arabidopsis thaliana (Mouse-ear cress).